Here is an 80-residue protein sequence, read N- to C-terminus: Serine palmitoyltransferase small subunit A-B (80 aa).

Residues 1–21 are Cytoplasmic-facing; it reads MKVSCEDVNGPRSSLGRAWNH. The chain crosses the membrane as a helical span at residues 22-38; that stretch reads VSWLYYQYLLVTALYML. Residues 39–43 are Lumenal-facing; it reads EPWER. The chain crosses the membrane as a helical span at residues 44 to 66; it reads TVFNSMLVSIVGMALYTGYIFMP. At 67 to 80 the chain is on the cytoplasmic side; the sequence is QHILAILHYFEIVQ.

Belongs to the SPTSS family. SPTSSA subfamily. Component of the serine palmitoyltransferase (SPT) complex, which is composed of SPTLC1, SPTLC2 or SPTLC3 and SPTSSA or SPTSSB. The heterodimer consisting of SPTLC1 and SPTLC2/SPTLC3 forms the catalytic core of the enzyme, while SPTSSA or SPTSSB subunits determine substrate specificity. SPT also interacts with ORMDL proteins, especially ORMDL3, which negatively regulate SPT activity in the presence of ceramides.

It localises to the endoplasmic reticulum membrane. It functions in the pathway lipid metabolism; sphingolipid metabolism. Its function is as follows. Component of the serine palmitoyltransferase multisubunit enzyme (SPT) that catalyzes the initial and rate-limiting step in sphingolipid biosynthesis by condensing L-serine and activated acyl-CoA (most commonly palmitoyl-CoA) to form long-chain bases. The SPT complex is composed of SPTLC1, SPTLC2 or SPTLC3 and SPTSSA or SPTSSB. Within this complex, the heterodimer consisting of SPTLC1 and SPTLC2/SPTLC3 forms the catalytic core. Within the SPT complex, SPTSSA stimulates the catalytic activity and plays a role in substrate specificity, which depends upon the overall complex composition. The SPTLC1-SPTLC2-SPTSSA complex shows a strong preference for C16-CoA substrate, while the SPTLC1-SPTLC3-SPTSSA isozyme uses both C14-CoA and C16-CoA as substrates, with a slight preference for C14-CoA. Independently of its action as a SPT component, may be involved in MBOAT7 localization to mitochondria-associated membranes, a membrane bridge between the endoplasmic reticulum and mitochondria, may hence affect MBOAT7-catalyzed incorporation of arachidonic acid into phosphatidylinositol. This chain is Serine palmitoyltransferase small subunit A-B (sptssa-b), found in Xenopus laevis (African clawed frog).